Here is a 347-residue protein sequence, read N- to C-terminus: NADH-ubiquinone oxidoreductase chain 2 (347 aa).

The next 10 membrane-spanning stretches (helical) occupy residues 13 to 33, 59 to 79, 96 to 116, 122 to 142, 149 to 169, 178 to 198, 201 to 221, 247 to 267, 274 to 294, and 323 to 343; these read IILG…WIGF, YFLT…TNLL, AVMT…FWVP, IPLS…LSVL, VSPT…GWGG, ILAY…AYNP, TLLN…LFMF, IMLS…WMII, ESLL…YFYM, and VPLL…APAL.

The protein belongs to the complex I subunit 2 family. In terms of assembly, core subunit of respiratory chain NADH dehydrogenase (Complex I) which is composed of 45 different subunits. Interacts with TMEM242.

Its subcellular location is the mitochondrion inner membrane. The enzyme catalyses a ubiquinone + NADH + 5 H(+)(in) = a ubiquinol + NAD(+) + 4 H(+)(out). In terms of biological role, core subunit of the mitochondrial membrane respiratory chain NADH dehydrogenase (Complex I) which catalyzes electron transfer from NADH through the respiratory chain, using ubiquinone as an electron acceptor. Essential for the catalytic activity and assembly of complex I. The sequence is that of NADH-ubiquinone oxidoreductase chain 2 from Megaderma spasma (Lesser false vampire bat).